Here is a 605-residue protein sequence, read N- to C-terminus: Alpha-1,3-galactosidase A (605 aa).

The first 20 residues, M1–A20, serve as a signal peptide directing secretion. PbH1 repeat units lie at residues S256–Y278, K312–G334, T421–T443, P444–A466, V477–N507, and H517–N547.

The protein belongs to the glycosyl hydrolase 110 family. A subfamily.

It catalyses the reaction Hydrolysis of terminal, non-reducing branched (1-&gt;3)-alpha-D-galactosidic residues, producing free D-galactose.. The catalysed reaction is Hydrolysis of terminal, non-reducing alpha-D-galactose residues in alpha-D-galactosides, including galactose oligosaccharides, galactomannans and galactolipids.. Alpha-galactosidase that specifically removes branched alpha-1,3-linked galactose residues present in blood group B antigens. Has no activity toward linear alpha-1,3-linked galactose residues. The chain is Alpha-1,3-galactosidase A (glaA) from Bacteroides fragilis (strain YCH46).